The primary structure comprises 113 residues: Regulator of rDNA transcription protein 7 (113 aa).

A run of 2 helical transmembrane segments spans residues 13-35 and 70-92; these read FLPI…LFYN and FLLG…LLFL.

The protein localises to the membrane. Identified in a screen for mutants with decreased levels of rDNA transcription. This chain is Regulator of rDNA transcription protein 7 (RRT7), found in Saccharomyces cerevisiae (strain ATCC 204508 / S288c) (Baker's yeast).